The chain runs to 614 residues: MPVYRSKTTTSGRNMAGARALWRATGMKDEDFQKPIIAVANSFTQFVPGHVHLKDLGQLVAREIEKAGGVAKEFNTIAVDDGIAMGHDGMLYSLPSRDIIADSVEYMVNAHCADALVCISNCDKITPGMLMAAMRLNIPVIFVSGGPMEAGKTRLAEHKLDLVDAIVIGTDKNASDEQVEAYERSACPTCGSCSGMFTANSMNCLTEALGLSLPGNGSLLATHADREQLFLEAGRRIVEITKRYYEQDDASVLPRAIATFEAFENAMALDIAMGGSTNTILHLLAAAQEGGVPFTMTDIDRLSRKVPQLCKVAPNTQKYHMEDVHRAGGVVGILAELNRGGLLHNQVPTVHSKTLQEGLDQWDIISTGSDAVATFYRAGPAGIPTQVAFSQATRWPTLDADRVEGCIRSVEHAYSKEGGLAVLRGNIALDGCVVKTSGVDESIWVFEGPAYVVESQDQAVKDILDGKVKAGDVVVIRYEGPRGGPGMQEMLYPTSYLKSQGLGKACALLTDGRFSGGTSGLSIGHVSPEAAAGGAIGLVETGDIIHIDIPNRSINVKLSNQELAERRDAMAAKGNKAWKPIEARPRKVSASLKAYAMLATSADKGAVRDLSKLD.

Mg(2+) is bound at residue Asp-81. Cys-122 contributes to the [2Fe-2S] cluster binding site. Mg(2+) is bound by residues Asp-123 and Lys-124. Lys-124 is modified (N6-carboxylysine). Cys-193 is a [2Fe-2S] cluster binding site. Glu-489 is a Mg(2+) binding site. Ser-515 functions as the Proton acceptor in the catalytic mechanism.

Belongs to the IlvD/Edd family. Homodimer. [2Fe-2S] cluster is required as a cofactor. Mg(2+) serves as cofactor.

It carries out the reaction (2R)-2,3-dihydroxy-3-methylbutanoate = 3-methyl-2-oxobutanoate + H2O. The enzyme catalyses (2R,3R)-2,3-dihydroxy-3-methylpentanoate = (S)-3-methyl-2-oxopentanoate + H2O. It functions in the pathway amino-acid biosynthesis; L-isoleucine biosynthesis; L-isoleucine from 2-oxobutanoate: step 3/4. Its pathway is amino-acid biosynthesis; L-valine biosynthesis; L-valine from pyruvate: step 3/4. In terms of biological role, functions in the biosynthesis of branched-chain amino acids. Catalyzes the dehydration of (2R,3R)-2,3-dihydroxy-3-methylpentanoate (2,3-dihydroxy-3-methylvalerate) into 2-oxo-3-methylpentanoate (2-oxo-3-methylvalerate) and of (2R)-2,3-dihydroxy-3-methylbutanoate (2,3-dihydroxyisovalerate) into 2-oxo-3-methylbutanoate (2-oxoisovalerate), the penultimate precursor to L-isoleucine and L-valine, respectively. This Cellvibrio japonicus (strain Ueda107) (Pseudomonas fluorescens subsp. cellulosa) protein is Dihydroxy-acid dehydratase.